Consider the following 134-residue polypeptide: Small ribosomal subunit protein uS9 (134 aa).

The disordered stretch occupies residues 114 to 134; that stretch reads QKESKNFGGPGARAKYQKSYR.

Belongs to the universal ribosomal protein uS9 family.

The sequence is that of Small ribosomal subunit protein uS9 from Methanosarcina acetivorans (strain ATCC 35395 / DSM 2834 / JCM 12185 / C2A).